The primary structure comprises 185 residues: Ribosome-recycling factor (185 aa).

This sequence belongs to the RRF family.

It localises to the cytoplasm. Its function is as follows. Responsible for the release of ribosomes from messenger RNA at the termination of protein biosynthesis. May increase the efficiency of translation by recycling ribosomes from one round of translation to another. This is Ribosome-recycling factor from Clostridioides difficile (strain 630) (Peptoclostridium difficile).